The primary structure comprises 227 residues: PKHD-type hydroxylase Pden_4677 (227 aa).

The region spanning His-78–Ser-178 is the Fe2OG dioxygenase domain. Fe cation is bound by residues His-96, Asp-98, and His-159. Residue Arg-169 coordinates 2-oxoglutarate.

Requires Fe(2+) as cofactor. It depends on L-ascorbate as a cofactor.

This chain is PKHD-type hydroxylase Pden_4677, found in Paracoccus denitrificans (strain Pd 1222).